Reading from the N-terminus, the 244-residue chain is Phosphoadenosine 5'-phosphosulfate reductase (244 aa).

Cys239 acts as the Nucleophile; cysteine thiosulfonate intermediate in catalysis.

The protein belongs to the PAPS reductase family. CysH subfamily.

It localises to the cytoplasm. It carries out the reaction [thioredoxin]-disulfide + sulfite + adenosine 3',5'-bisphosphate + 2 H(+) = [thioredoxin]-dithiol + 3'-phosphoadenylyl sulfate. The protein operates within sulfur metabolism; hydrogen sulfide biosynthesis; sulfite from sulfate: step 3/3. Its function is as follows. Catalyzes the formation of sulfite from phosphoadenosine 5'-phosphosulfate (PAPS) using thioredoxin as an electron donor. This chain is Phosphoadenosine 5'-phosphosulfate reductase, found in Pectobacterium atrosepticum (strain SCRI 1043 / ATCC BAA-672) (Erwinia carotovora subsp. atroseptica).